A 981-amino-acid chain; its full sequence is Calsyntenin-1 (981 aa).

The N-terminal stretch at 1–28 (MLRRPAPALAPAARLLLAGLLCGGGVWA) is a signal peptide. The Extracellular segment spans residues 29-859 (ARVNKHKPWL…PHPFAVVPST (831 aa)). Cadherin domains are found at residues 38–164 (LEPT…APVF) and 165–265 (KEKS…TPGW). N-linked (GlcNAc...) asparagine glycans are attached at residues N346, N366, and N515. A helical membrane pass occupies residues 860 to 880 (ATVVIVVCVSFLVFMIILGVF). Over 881 to 981 (RIRAAHRRTM…LEWDDSTLSY (101 aa)) the chain is Cytoplasmic. The disordered stretch occupies residues 915 to 981 (METYEDQHSS…LEWDDSTLSY (67 aa)). The segment covering 925–960 (EEEEEEEEEEESEDGEEEDDITSAESESSEEEEGEQ) has biased composition (acidic residues). Over residues 962 to 981 (DPQNATRQQQLEWDDSTLSY) the composition is skewed to polar residues.

It belongs to the calsyntenin family. As to quaternary structure, directly interacts with APBA2. Forms a tripartite complex with APBA2 and APP. Interacts with KLC1. In terms of assembly, interacts with APBB1; this interaction stabilizes AlcICD metabolism. Interacts with PSEN1. Proteolytically processed under normal cellular conditions. A primary zeta-cleavage generates a large extracellular (soluble) N-terminal domain (sAlc) and a short C-terminal transmembrane fragment (CTF1). A secondary cleavage catalyzed by presenilin gamma-secretase within the transmembrane domain releases the beta-Alc-alpha chain in the extracellular milieu and produces an intracellular fragment (AlcICD). This processing is strongly suppressed in the tripartite complex formed with APBA2 and APP, which seems to prevent the association with PSEN1. In terms of tissue distribution, expressed in the brain and, a lower level, in the heart, skeletal muscle, kidney and placenta. Accumulates in dystrophic neurites around the amyloid core of Alzheimer disease senile plaques (at protein level).

The protein localises to the postsynaptic cell membrane. It localises to the endoplasmic reticulum membrane. The protein resides in the golgi apparatus membrane. Its subcellular location is the cell projection. It is found in the neuron projection. The protein localises to the nucleus. Its function is as follows. Postsynaptic adhesion molecule that binds to presynaptic neurexins to mediate both excitatory and inhibitory synapse formation. Promotes synapse development by acting as a cell adhesion molecule at the postsynaptic membrane, which associates with neurexin-alpha at the presynaptic membrane. Also functions as a cargo in axonal anterograde transport by acting as a molecular adapter that promotes KLC1 association with vesicles. Complex formation with APBA2 and APP, stabilizes APP metabolism and enhances APBA2-mediated suppression of beta-APP40 secretion, due to the retardation of intracellular APP maturation. Functionally, as intracellular fragment AlcICD, suppresses APBB1-dependent transactivation stimulated by APP C-terminal intracellular fragment (AICD), most probably by competing with AICD for APBB1-binding. In complex with APBA2 and C99, a C-terminal APP fragment, abolishes C99 interaction with PSEN1 and thus APP C99 cleavage by gamma-secretase, most probably through stabilization of the direct interaction between APBA2 and APP. The polypeptide is Calsyntenin-1 (Homo sapiens (Human)).